The sequence spans 566 residues: Putative ABC transporter ATP-binding protein BCE_2668 (566 aa).

ABC transporter domains follow at residues 5–246 (ISFE…GLRE) and 300–533 (LKVE…ANLK). ATP is bound by residues 39 to 46 (GRSGSGKS) and 333 to 340 (GHNGAGKS).

The protein belongs to the ABC transporter superfamily.

It localises to the cell membrane. Probably part of an ABC transporter complex. Responsible for energy coupling to the transport system. In Bacillus cereus (strain ATCC 10987 / NRS 248), this protein is Putative ABC transporter ATP-binding protein BCE_2668.